Reading from the N-terminus, the 167-residue chain is Aphrodisin (167 aa).

The N-terminal stretch at 1–16 (MVKILLLALVFSLAHA) is a signal peptide. Pyrrolidone carboxylic acid is present on Gln17. 2 cysteine pairs are disulfide-bonded: Cys54–Cys58 and Cys73–Cys165. N-linked (GlcNAc...) asparagine glycosylation is found at Asn57 and Asn85.

This sequence belongs to the calycin superfamily. Lipocalin family. Expressed in the vagina, uterus, and Bartholin's glands of female hamsters. Secreted in vaginal discharge.

It localises to the secreted. In terms of biological role, acts as an aphrodisiac pheromone, reliably eliciting copulatory behavior from male hamster. In Cricetus cricetus (Black-bellied hamster), this protein is Aphrodisin.